The chain runs to 309 residues: General transcription factor IIH subunit 3 (309 aa).

Residues 269-286 (CSVCLSIFCNFSPICTTC) form a C4-type zinc finger.

The protein belongs to the TFB4 family. As to quaternary structure, part of a TFIID-containing RNA polymerase II pre-initiation complex that is composed of TBP and at least GTF2A1, GTF2A2, GTF2E1, GTF2E2, GTF2F1, GTF2H2, GTF2H3, GTF2H4, GTF2H5, GTF2B, TCEA1, ERCC2, ERCC3, TAF1, TAF2, TAF3, TAF4, TAF5, TAF6, TAF7, TAF8, TAF9, TAF10, TAF11, TAF12 and TAF13. Component of the 7-subunit TFIIH core complex composed of XPB/ERCC3, XPD/ERCC2, GTF2H1, GTF2H2, GTF2H3, GTF2H4 and GTF2H5, which is active in NER. The core complex associates with the 3-subunit CDK-activating kinase (CAK) module composed of CCNH/cyclin H, CDK7 and MNAT1 to form the 10-subunit holoenzyme (holo-TFIIH) active in transcription. Interacts with RARA; the interaction requires prior phosphorylation of RARA on 'Ser-369' which then enhances interaction of RARA with CDK7.

It localises to the nucleus. Functionally, component of the general transcription and DNA repair factor IIH (TFIIH) core complex, which is involved in general and transcription-coupled nucleotide excision repair (NER) of damaged DNA and, when complexed to CAK, in RNA transcription by RNA polymerase II. In NER, TFIIH acts by opening DNA around the lesion to allow the excision of the damaged oligonucleotide and its replacement by a new DNA fragment. In transcription, TFIIH has an essential role in transcription initiation. When the pre-initiation complex (PIC) has been established, TFIIH is required for promoter opening and promoter escape. Phosphorylation of the C-terminal tail (CTD) of the largest subunit of RNA polymerase II by the kinase module CAK controls the initiation of transcription. The polypeptide is General transcription factor IIH subunit 3 (GTF2H3) (Bos taurus (Bovine)).